A 297-amino-acid chain; its full sequence is Aspartate carbamoyltransferase catalytic subunit (297 aa).

Carbamoyl phosphate is bound by residues Arg-51 and Thr-52. L-aspartate is bound at residue Lys-79. The carbamoyl phosphate site is built by Arg-101, His-130, and Gln-133. The L-aspartate site is built by Arg-163 and Arg-215. Carbamoyl phosphate is bound by residues Gly-256 and Pro-257.

This sequence belongs to the aspartate/ornithine carbamoyltransferase superfamily. ATCase family. In terms of assembly, heterododecamer (2C3:3R2) of six catalytic PyrB chains organized as two trimers (C3), and six regulatory PyrI chains organized as three dimers (R2).

The catalysed reaction is carbamoyl phosphate + L-aspartate = N-carbamoyl-L-aspartate + phosphate + H(+). It functions in the pathway pyrimidine metabolism; UMP biosynthesis via de novo pathway; (S)-dihydroorotate from bicarbonate: step 2/3. Catalyzes the condensation of carbamoyl phosphate and aspartate to form carbamoyl aspartate and inorganic phosphate, the committed step in the de novo pyrimidine nucleotide biosynthesis pathway. This is Aspartate carbamoyltransferase catalytic subunit from Ehrlichia ruminantium (strain Gardel).